The chain runs to 158 residues: NAD(P)H-quinone oxidoreductase subunit J, chloroplastic (158 aa).

The protein belongs to the complex I 30 kDa subunit family. In terms of assembly, NDH is composed of at least 16 different subunits, 5 of which are encoded in the nucleus.

The protein resides in the plastid. It is found in the chloroplast thylakoid membrane. It carries out the reaction a plastoquinone + NADH + (n+1) H(+)(in) = a plastoquinol + NAD(+) + n H(+)(out). The catalysed reaction is a plastoquinone + NADPH + (n+1) H(+)(in) = a plastoquinol + NADP(+) + n H(+)(out). NDH shuttles electrons from NAD(P)H:plastoquinone, via FMN and iron-sulfur (Fe-S) centers, to quinones in the photosynthetic chain and possibly in a chloroplast respiratory chain. The immediate electron acceptor for the enzyme in this species is believed to be plastoquinone. Couples the redox reaction to proton translocation, and thus conserves the redox energy in a proton gradient. This Drimys granadensis protein is NAD(P)H-quinone oxidoreductase subunit J, chloroplastic.